A 160-amino-acid polypeptide reads, in one-letter code: RNA pyrophosphohydrolase (160 aa).

In terms of domain architecture, Nudix hydrolase spans P10–D154. The Nudix box signature appears at G44 to G65.

It belongs to the Nudix hydrolase family. RppH subfamily. A divalent metal cation is required as a cofactor.

Functionally, accelerates the degradation of transcripts by removing pyrophosphate from the 5'-end of triphosphorylated RNA, leading to a more labile monophosphorylated state that can stimulate subsequent ribonuclease cleavage. The protein is RNA pyrophosphohydrolase of Roseobacter denitrificans (strain ATCC 33942 / OCh 114) (Erythrobacter sp. (strain OCh 114)).